A 176-amino-acid polypeptide reads, in one-letter code: Inner membrane-spanning protein YciB (176 aa).

The next 6 membrane-spanning stretches (helical) occupy residues 3 to 23 (FLFD…WGIF), 24 to 44 (TATA…AFRH), 49 to 69 (TMLW…LVLH), 72 to 92 (KFIQ…LLAA), 121 to 141 (LAWA…VHNF), and 149 to 169 (FKLF…SLWL).

The protein belongs to the YciB family.

The protein localises to the cell inner membrane. Plays a role in cell envelope biogenesis, maintenance of cell envelope integrity and membrane homeostasis. This is Inner membrane-spanning protein YciB from Burkholderia cenocepacia (strain ATCC BAA-245 / DSM 16553 / LMG 16656 / NCTC 13227 / J2315 / CF5610) (Burkholderia cepacia (strain J2315)).